The primary structure comprises 283 residues: MAPSPSKRKERSEDKAKERGKEKAPGKEATDKDRGRDKAKKRRSASSGSSSSSRSRSSSSSSSSSGSSSGSSSGSSSSASSRSGSSSSSRSSSSSSSSGSPSPSRRRHDNRRRSRSKSKQPKRDEKERKRRSPSPRPTKVHIGRLTRNVTKDHILEIFSTYGKIKMIDMPVDRYHPHLSKGYAYVEFEAPEEAEKALKHMDGGQIDGQEITASAVLTPWPMRAMPRRFSPPRRMLPPPPMWRRSPPRMRRRSRSPRRRSPVRRRSRSPARRRHRSRSSSNSSR.

Disordered regions lie at residues 1-140 and 223-283; these read MAPS…PTKV and AMPR…NSSR. The segment covering 10 to 36 has biased composition (basic and acidic residues); the sequence is ERSEDKAKERGKEKAPGKEATDKDRGR. Over residues 45 to 103 the composition is skewed to low complexity; it reads ASSGSSSSSRSRSSSSSSSSSGSSSGSSSGSSSSASSRSGSSSSSRSSSSSSSSGSPSP. 2 stretches are compositionally biased toward basic residues: residues 104-120 and 128-140; these read SRRRHDNRRRSRSKSKQ and RKRRSPSPRPTKV. Positions 161–240 constitute an RRM domain; that stretch reads YGKIKMIDMP…PRRMLPPPPM (80 aa). Positions 244–276 are enriched in basic residues; it reads SPPRMRRRSRSPRRRSPVRRRSRSPARRRHRSR.

This sequence belongs to the splicing factor SR family. In terms of assembly, component of the active spliceosome.

The protein localises to the nucleus. It localises to the nucleus speckle. Its subcellular location is the cytoplasm. Component of a splicing-dependent multiprotein exon junction complex (EJC) deposited at splice junction on mRNAs. The EJC is a dynamic structure consisting of a few core proteins and several more peripheral nuclear and cytoplasmic associated factors that join the complex only transiently either during EJC assembly or during subsequent mRNA metabolism. Putative component of the spliceosome which enhances the formation of the ATP-dependent A complex of the spliceosome. May participate in mRNA 3'-end cleavage. Also mediates increase of mRNA abundance and translational efficiency. The chain is RNA-binding protein with serine-rich domain 1-B (rnps1-b) from Xenopus laevis (African clawed frog).